Reading from the N-terminus, the 158-residue chain is MGIGNENKGFITASADALINWVRTGSLWPVTTGLACCAVEMMHAGAARYDLDRFGIVFRPSPRQSDVLIVAGTLCNKMAPALRQVYDQMPDPKWVISMGSCANGGGYYHYSYSVVRGCDRIVPVDIYVPGCPPTAEALVYGIIQLQNKIIRKDTIARK.

[4Fe-4S] cluster is bound by residues cysteine 36, cysteine 37, cysteine 101, and cysteine 131.

This sequence belongs to the complex I 20 kDa subunit family. NDH-1 is composed of 14 different subunits. Subunits NuoB, C, D, E, F, and G constitute the peripheral sector of the complex. It depends on [4Fe-4S] cluster as a cofactor.

Its subcellular location is the cell inner membrane. The enzyme catalyses a quinone + NADH + 5 H(+)(in) = a quinol + NAD(+) + 4 H(+)(out). Its function is as follows. NDH-1 shuttles electrons from NADH, via FMN and iron-sulfur (Fe-S) centers, to quinones in the respiratory chain. The immediate electron acceptor for the enzyme in this species is believed to be ubiquinone. Couples the redox reaction to proton translocation (for every two electrons transferred, four hydrogen ions are translocated across the cytoplasmic membrane), and thus conserves the redox energy in a proton gradient. This chain is NADH-quinone oxidoreductase subunit B, found in Francisella tularensis subsp. tularensis (strain FSC 198).